The sequence spans 530 residues: Bifunctional purine biosynthesis protein PurH (530 aa).

Positions 1 to 148 (MENSRPIKRA…KNHKDVGIVV (148 aa)) constitute an MGS-like domain.

It belongs to the PurH family.

It catalyses the reaction (6R)-10-formyltetrahydrofolate + 5-amino-1-(5-phospho-beta-D-ribosyl)imidazole-4-carboxamide = 5-formamido-1-(5-phospho-D-ribosyl)imidazole-4-carboxamide + (6S)-5,6,7,8-tetrahydrofolate. It carries out the reaction IMP + H2O = 5-formamido-1-(5-phospho-D-ribosyl)imidazole-4-carboxamide. It participates in purine metabolism; IMP biosynthesis via de novo pathway; 5-formamido-1-(5-phospho-D-ribosyl)imidazole-4-carboxamide from 5-amino-1-(5-phospho-D-ribosyl)imidazole-4-carboxamide (10-formyl THF route): step 1/1. It functions in the pathway purine metabolism; IMP biosynthesis via de novo pathway; IMP from 5-formamido-1-(5-phospho-D-ribosyl)imidazole-4-carboxamide: step 1/1. This chain is Bifunctional purine biosynthesis protein PurH, found in Psychromonas ingrahamii (strain DSM 17664 / CCUG 51855 / 37).